We begin with the raw amino-acid sequence, 262 residues long: MHTLTAAIEMDKLDANLEQQFDLNLIEAVKLNPVIYDRSHYNYKHFVRKAQTWKQIAETLGVPEQKCTKRWKSLRDKFAREMKLCQESRWRYFKQMQFLVDSIRQYRESLLGKCANGSQSANQVADPSQQQQAQQQTVVDIFAQPFNGSATTSAQALTHPHEITVTSDAQLATAVGKDQKPYFYEPPLKRERSEEEHSDNMLNTIKIFQNNVSQAVSAEDQSFGMVVTDMLNTLGVRQKAEAKVHIIKYLTDMQLLAQHNKY.

Residues 24–104 constitute a DNA-binding region (MADF); it reads NLIEAVKLNP…QMQFLVDSIR (81 aa). One can recognise a BESS domain in the interval 217-256; it reads SAEDQSFGMVVTDMLNTLGVRQKAEAKVHIIKYLTDMQLL.

In terms of processing, O-glycosylated; contains N-acetylglucosamine side chains.

The protein resides in the nucleus. Its function is as follows. May play an important role not only in the regulation of Adh expression but also in the transcription of other genes. In Drosophila melanogaster (Fruit fly), this protein is Transcription factor Adf-1 (Adf1).